Here is a 359-residue protein sequence, read N- to C-terminus: tRNA-specific 2-thiouridylase MnmA (359 aa).

ATP-binding positions include 7–14 and L33; that span reads GLSGGVDS. The active-site Nucleophile is C94. The cysteines at positions 94 and 193 are disulfide-linked. G119 contacts ATP. The segment at 143-145 is interaction with tRNA; it reads KDQ. C193 acts as the Cysteine persulfide intermediate in catalysis. The interval 298–299 is interaction with tRNA; sequence RY.

Belongs to the MnmA/TRMU family.

It is found in the cytoplasm. The enzyme catalyses S-sulfanyl-L-cysteinyl-[protein] + uridine(34) in tRNA + AH2 + ATP = 2-thiouridine(34) in tRNA + L-cysteinyl-[protein] + A + AMP + diphosphate + H(+). Catalyzes the 2-thiolation of uridine at the wobble position (U34) of tRNA, leading to the formation of s(2)U34. In Trichodesmium erythraeum (strain IMS101), this protein is tRNA-specific 2-thiouridylase MnmA.